Here is a 583-residue protein sequence, read N- to C-terminus: Radixin (583 aa).

The FERM domain maps to 5–295 (INVRVTTMDA…GNHELYMRRR (291 aa)). 60–63 (KLNK) lines the a 1,2-diacyl-sn-glycero-3-phospho-(1D-myo-inositol) pocket. Residue Lys-83 is modified to N6-succinyllysine. An a 1,2-diacyl-sn-glycero-3-phospho-(1D-myo-inositol)-binding site is contributed by Lys-278. Disordered regions lie at residues 309-336 (AREEKHQKQLERAQLENEKKKREIAEKE), 374-407 (ELDQERKRAKEEAERLEKERQAAEEAKSALAKQA), and 460-526 (KEEL…RVKK). The segment covering 374–400 (ELDQERKRAKEEAERLEKERQAAEEAK) has biased composition (basic and acidic residues). Positions 469 to 480 (APPPPPPPPVIP) are enriched in pro residues. 2 stretches are compositionally biased toward basic and acidic residues: residues 483–492 (ENEHDEHDEN) and 506–525 (MNHRSEEERVTETQKNERVK). At Thr-564 the chain carries Phosphothreonine; by ROCK2.

Interacts with CPNE1 (via VWFA domain) and CPNE4 (via VWFA domain). Binds NHERF1. Interacts with NHERF1, NHERF2, LAYN, MME/NEP and ICAM2. Interacts (via FERM domain) with SPN/CD43 cytoplasmic tail. Interacts with CD44. Interacts with CLIC5; may work together in a complex which also includes EZR and MYO6 to stabilize linkages between the plasma membrane and subjacent actin cytoskeleton at the base of stereocilia. Phosphorylated by tyrosine-protein kinases. Phosphorylation by ROCK2 suppresses the head-to-tail association of the N-terminal and C-terminal halves resulting in an opened conformation which is capable of actin and membrane-binding.

The protein resides in the cell membrane. Its subcellular location is the cytoplasm. It is found in the cytoskeleton. The protein localises to the cleavage furrow. It localises to the cell projection. The protein resides in the microvillus. Its subcellular location is the stereocilium. A head-to-tail association, of the N-terminal and C-terminal halves results in a closed conformation (inactive form) which is incapable of actin or membrane-binding. Probably plays a crucial role in the binding of the barbed end of actin filaments to the plasma membrane. This is Radixin (RDX) from Bos taurus (Bovine).